A 151-amino-acid chain; its full sequence is 3-hydroxyacyl-[acyl-carrier-protein] dehydratase FabZ (151 aa).

The active site involves H54.

It belongs to the thioester dehydratase family. FabZ subfamily.

The protein resides in the cytoplasm. The enzyme catalyses a (3R)-hydroxyacyl-[ACP] = a (2E)-enoyl-[ACP] + H2O. Involved in unsaturated fatty acids biosynthesis. Catalyzes the dehydration of short chain beta-hydroxyacyl-ACPs and long chain saturated and unsaturated beta-hydroxyacyl-ACPs. The sequence is that of 3-hydroxyacyl-[acyl-carrier-protein] dehydratase FabZ from Pectobacterium atrosepticum (strain SCRI 1043 / ATCC BAA-672) (Erwinia carotovora subsp. atroseptica).